Reading from the N-terminus, the 325-residue chain is Secreted frizzled-related protein 3 (325 aa).

A signal peptide spans 1 to 32 (MVCGSPGGMLLLRAGLLALAALCLLRVPGARA). Positions 33–150 (AACEPVRIPL…VYDRGVCISP (118 aa)) constitute an FZ domain. 5 disulfide bridges follow: cysteine 35–cysteine 96, cysteine 43–cysteine 89, cysteine 80–cysteine 119, cysteine 108–cysteine 147, and cysteine 112–cysteine 136. Residue asparagine 49 is glycosylated (N-linked (GlcNAc...) asparagine). An NTR domain is found at 178–298 (CKCKPIRATQ…WDMKLRHLGL (121 aa)). The disordered stretch occupies residues 297–325 (GLSKSDSSNSDSTQSQKSGRNSNPRQARN). Over residues 299–314 (SKSDSSNSDSTQSQKS) the composition is skewed to low complexity. Residues 315-325 (GRNSNPRQARN) show a composition bias toward polar residues.

Belongs to the secreted frizzled-related protein (sFRP) family. As to quaternary structure, interacts with MYOC. In terms of tissue distribution, expressed primarily in the cartilaginous cores of the long bone during embryonic and fetal development and in the appendicular skeleton (6-13 weeks). At 13 weeks of gestation, transcripts were present in early chondroblasts of the tarsal bones of the foot, the carpal bones of the hands and the epiphysis of long bones. Highly expressed in placenta and heart, followed by brain, skeletal muscle, kidney and pancreas. Weakly expressed in lung and liver.

The protein localises to the secreted. Soluble frizzled-related proteins (sFRPS) function as modulators of Wnt signaling through direct interaction with Wnts. They have a role in regulating cell growth and differentiation in specific cell types. SFRP3/FRZB appears to be involved in limb skeletogenesis. Antagonist of Wnt8 signaling. Regulates chondrocyte maturation and long bone development. This is Secreted frizzled-related protein 3 (FRZB) from Homo sapiens (Human).